Here is a 530-residue protein sequence, read N- to C-terminus: Asc-type amino acid transporter 1 (530 aa).

Residues 1–36 form a disordered region; that stretch reads MRRDSDMASHIQQPGGHGNPGPAPSPSPGPGPGPGA. Pro residues predominate over residues 21-33; the sequence is GPAPSPSPGPGPG. 10 helical membrane-spanning segments follow: residues 46-66, 78-98, 119-139, 192-212, 274-294, 316-336, 368-388, 394-414, 430-450, and 454-474; these read IGLV…GIFI, VGLA…GSLC, IFGG…MYPT, IQVI…TVGF, AIFI…VAYF, LLGY…FGGI, CTPI…MLVG, INYV…GLLV, LLVP…SFIS, and VCGV…LGVF. The segment at 508–530 is disordered; sequence EEENGPMGQPSPLPITDKPLKTQ.

Belongs to the amino acid-polyamine-organocation (APC) superfamily. Disulfide-linked heterodimer with the amino acid transport protein SLC3A2/4F2hc.

The protein resides in the cell membrane. The catalysed reaction is L-alanine(in) + glycine(out) = L-alanine(out) + glycine(in). The enzyme catalyses L-serine(out) + L-alanine(in) = L-serine(in) + L-alanine(out). It carries out the reaction L-threonine(out) + L-alanine(in) = L-threonine(in) + L-alanine(out). It catalyses the reaction L-cysteine(out) + L-alanine(in) = L-cysteine(in) + L-alanine(out). The catalysed reaction is 2-aminoisobutanoate(out) + L-alanine(in) = 2-aminoisobutanoate(in) + L-alanine(out). The enzyme catalyses D-serine(out) + L-alanine(in) = D-serine(in) + L-alanine(out). It carries out the reaction D-alanine(out) + L-alanine(in) = D-alanine(in) + L-alanine(out). It catalyses the reaction L-valine(out) + L-alanine(in) = L-valine(in) + L-alanine(out). The catalysed reaction is L-methionine(out) + L-alanine(in) = L-methionine(in) + L-alanine(out). The enzyme catalyses beta-alanine(out) + L-alanine(in) = beta-alanine(in) + L-alanine(out). It carries out the reaction D-cysteine(out) + L-alanine(in) = D-cysteine(in) + L-alanine(out). It catalyses the reaction D-threonine(out) + L-alanine(in) = D-threonine(in) + L-alanine(out). The catalysed reaction is D-isoleucine(out) + D-serine(in) = D-isoleucine(in) + D-serine(out). The enzyme catalyses D-serine(in) = D-serine(out). Its function is as follows. Associates with SLC3A2/4F2hc to form a functional heterodimeric complex that translocates small neutral L- and D-amino acids across the plasma membrane. Preferentially mediates exchange transport, but can also operate via facilitated diffusion. Acts as a major transporter for glycine, L- and D-serine in the central nervous system. At the spinal cord and brainstem regulates glycine metabolism and glycinergic inhibitory neurotransmission by providing for glycine de novo synthesis from L-serine and glycine recycling from astrocytes to glycinergic motor neurons. At Schaffer collateral-CA1 synapses mediates D-serine and glycine release that modulates post-synaptic activation of NMDA receptors and excitatory glutamatergic transmission. May regulate D-serine release from mesenchymal progenitors located in developing subcutaneous adipose tissue, favoring white adipocyte over thermogenic beige adipocyte lineage commitment. The protein is Asc-type amino acid transporter 1 (Slc7a10) of Rattus norvegicus (Rat).